A 429-amino-acid polypeptide reads, in one-letter code: MPIIEQVGAREILDSRGNPTVEVEIALTDGTFARAAVPSGASTGEHEAVELRDGGERYGGKGVQKAVQAVLDEIGPAVIGLNADDQRLVDQALVDLDGTPDKSRLGGNAILGVSLAVAKAAADSAELPLFRYLGGPNAHILPVPMMNILNGGAHADTAVDIQEFMVAPIGAPSFAEALRWGAEVYHSLKSVLKKEGLSTGLGDEGGFAPDVAGTTAALDLIGRAIESAGFKLGTDVALALDAAATEFYSDGTGYKFEGSTRTAEQMAEFYAGLLGAYPLVSIEDPLSEDDWDGWAALTASIGDRVQLVGDDVFVTNPERLEEGIEKGVANALLVKVNQIGTLTETLDAVALAHHSGYRTMMSHRSGETEDTTIADLAVAVGSGQIKTGAPARSERVAKYNQLLRIEEALGDAARYAGDLAFPRFALETR.

Gln-162 is a (2R)-2-phosphoglycerate binding site. The active-site Proton donor is the Glu-204. The Mg(2+) site is built by Asp-241, Glu-283, and Asp-310. Positions 335, 364, 365, and 386 each coordinate (2R)-2-phosphoglycerate. Lys-335 functions as the Proton acceptor in the catalytic mechanism.

It belongs to the enolase family. Requires Mg(2+) as cofactor.

It localises to the cytoplasm. It is found in the secreted. The protein resides in the cell surface. The catalysed reaction is (2R)-2-phosphoglycerate = phosphoenolpyruvate + H2O. It functions in the pathway carbohydrate degradation; glycolysis; pyruvate from D-glyceraldehyde 3-phosphate: step 4/5. In terms of biological role, catalyzes the reversible conversion of 2-phosphoglycerate (2-PG) into phosphoenolpyruvate (PEP). It is essential for the degradation of carbohydrates via glycolysis. The sequence is that of Enolase from Mycobacterium avium (strain 104).